Consider the following 714-residue polypeptide: DNA ligase (714 aa).

Residues 48–52 (DADYD), 97–98 (SL), and E129 each bind NAD(+). K131 (N6-AMP-lysine intermediate) is an active-site residue. Positions 152, 189, 307, and 331 each coordinate NAD(+). Positions 436, 439, 454, and 460 each coordinate Zn(2+). Positions 637 to 714 (KQDTAVAGKT…TEDEWLALIG (78 aa)) constitute a BRCT domain.

The protein belongs to the NAD-dependent DNA ligase family. LigA subfamily. The cofactor is Mg(2+). Mn(2+) is required as a cofactor.

The enzyme catalyses NAD(+) + (deoxyribonucleotide)n-3'-hydroxyl + 5'-phospho-(deoxyribonucleotide)m = (deoxyribonucleotide)n+m + AMP + beta-nicotinamide D-nucleotide.. Its function is as follows. DNA ligase that catalyzes the formation of phosphodiester linkages between 5'-phosphoryl and 3'-hydroxyl groups in double-stranded DNA using NAD as a coenzyme and as the energy source for the reaction. It is essential for DNA replication and repair of damaged DNA. This chain is DNA ligase, found in Rhodopseudomonas palustris (strain BisB5).